Consider the following 349-residue polypeptide: Aspartate carbamoyltransferase catalytic subunit (349 aa).

2 residues coordinate carbamoyl phosphate: R59 and T60. K87 is a binding site for L-aspartate. Residues R109, H142, and Q145 each contribute to the carbamoyl phosphate site. R182 and R253 together coordinate L-aspartate. Positions 294 and 295 each coordinate carbamoyl phosphate.

The protein belongs to the aspartate/ornithine carbamoyltransferase superfamily. ATCase family. In terms of assembly, heterododecamer (2C3:3R2) of six catalytic PyrB chains organized as two trimers (C3), and six regulatory PyrI chains organized as three dimers (R2).

The enzyme catalyses carbamoyl phosphate + L-aspartate = N-carbamoyl-L-aspartate + phosphate + H(+). Its pathway is pyrimidine metabolism; UMP biosynthesis via de novo pathway; (S)-dihydroorotate from bicarbonate: step 2/3. In terms of biological role, catalyzes the condensation of carbamoyl phosphate and aspartate to form carbamoyl aspartate and inorganic phosphate, the committed step in the de novo pyrimidine nucleotide biosynthesis pathway. In Synechococcus sp. (strain CC9311), this protein is Aspartate carbamoyltransferase catalytic subunit.